Reading from the N-terminus, the 366-residue chain is Eukaryotic translation initiation factor 3 subunit H (366 aa).

In terms of domain architecture, MPN spans 12 to 161 (VKVEALVVMK…LRAFRLSPKF (150 aa)).

The protein belongs to the eIF-3 subunit H family. Component of the eukaryotic translation initiation factor 3 (eIF-3) complex.

The protein resides in the cytoplasm. Its function is as follows. Component of the eukaryotic translation initiation factor 3 (eIF-3) complex, which is involved in protein synthesis of a specialized repertoire of mRNAs and, together with other initiation factors, stimulates binding of mRNA and methionyl-tRNAi to the 40S ribosome. The eIF-3 complex specifically targets and initiates translation of a subset of mRNAs involved in cell proliferation. The polypeptide is Eukaryotic translation initiation factor 3 subunit H (Emericella nidulans (strain FGSC A4 / ATCC 38163 / CBS 112.46 / NRRL 194 / M139) (Aspergillus nidulans)).